The following is a 406-amino-acid chain: ESX-5 secretion system protein EccE5 (406 aa).

A run of 2 helical transmembrane segments spans residues 9–29 (LALS…ILAV) and 43–63 (VAWW…VVSY).

The protein belongs to the EccE family. In terms of assembly, part of the ESX-5 / type VII secretion system (T7SS), which is composed of cytosolic and membrane components. The ESX-5 membrane complex is composed of EccB5, EccC5, EccD5 and EccE5.

The protein resides in the cell inner membrane. In terms of biological role, part of the ESX-5 specialized secretion system, which is responsible for the secretion of EsxN and a number of PE_PGRS and PPE proteins, including PPE41. The chain is ESX-5 secretion system protein EccE5 from Mycobacterium tuberculosis (strain ATCC 25618 / H37Rv).